The following is a 180-amino-acid chain: Cytidylate kinase 2 (180 aa).

G7 to T15 serves as a coordination point for ATP.

This sequence belongs to the cytidylate kinase family. Type 2 subfamily.

The protein resides in the cytoplasm. It carries out the reaction CMP + ATP = CDP + ADP. It catalyses the reaction dCMP + ATP = dCDP + ADP. The sequence is that of Cytidylate kinase 2 (cmk2) from Borreliella burgdorferi (strain ATCC 35210 / DSM 4680 / CIP 102532 / B31) (Borrelia burgdorferi).